A 318-amino-acid polypeptide reads, in one-letter code: NADH-quinone oxidoreductase subunit H 2 (318 aa).

A run of 9 helical transmembrane segments spans residues 4 to 24, 77 to 97, 106 to 126, 146 to 166, 179 to 199, 214 to 234, 238 to 258, 262 to 282, and 293 to 313; these read LLIALFSLILLLALLGAAGVF, LAPALAAFPMLAGFGVVAFAP, VGVLFVMGMLALTVWALVLGA, LAYESFLGLSLMGCVLLAGSF, LWFILLQPLGAALFFLAGLAA, LVAGFMTEYSGMSFALFFLGE, ILLVAALFTTLFLGGWAGPIL, IWFGLKVAAISVVFVWLRAAL, and FAWKVALPLALLNLLVTAWIA.

Belongs to the complex I subunit 1 family. In terms of assembly, NDH-1 is composed of 14 different subunits. Subunits NuoA, H, J, K, L, M, N constitute the membrane sector of the complex.

The protein resides in the cell inner membrane. The enzyme catalyses a quinone + NADH + 5 H(+)(in) = a quinol + NAD(+) + 4 H(+)(out). Its function is as follows. NDH-1 shuttles electrons from NADH, via FMN and iron-sulfur (Fe-S) centers, to quinones in the respiratory chain. The immediate electron acceptor for the enzyme in this species is believed to be ubiquinone. Couples the redox reaction to proton translocation (for every two electrons transferred, four hydrogen ions are translocated across the cytoplasmic membrane), and thus conserves the redox energy in a proton gradient. This subunit may bind ubiquinone. This Cereibacter sphaeroides (strain ATCC 17023 / DSM 158 / JCM 6121 / CCUG 31486 / LMG 2827 / NBRC 12203 / NCIMB 8253 / ATH 2.4.1.) (Rhodobacter sphaeroides) protein is NADH-quinone oxidoreductase subunit H 2.